The following is a 92-amino-acid chain: Small ribosomal subunit protein uS19 (92 aa).

A disordered region spans residues 73-92 (EFSPTRSFRGHAGAKNKGRK). The span at 80–92 (FRGHAGAKNKGRK) shows a compositional bias: basic residues.

The protein belongs to the universal ribosomal protein uS19 family.

In terms of biological role, protein S19 forms a complex with S13 that binds strongly to the 16S ribosomal RNA. The sequence is that of Small ribosomal subunit protein uS19 from Christiangramia forsetii (strain DSM 17595 / CGMCC 1.15422 / KT0803) (Gramella forsetii).